The following is a 78-amino-acid chain: Spermatid-specific protein T1 (78 aa).

A hydrophobic region spans residues 1–21; sequence MKVAANSSKMLAEKLELMKGG. Residues 1–78 form a disordered region; it reads MKVAANSSKM…YSRRRYRRRR (78 aa). Residues 20–78 show a composition bias toward basic residues; sequence GGRRRRRRSRRRRRRSRRRSRSPYRRRYRRRRRRRRRRSRRRRYRRRRSYSRRRYRRRR.

Post-translationally, phosphorylation occurs at different degrees. The triphosphorylated form may be predominant in T1. SP1 appears to be phosphorylated in elongated spermatids, but dephosphorylated in mature sperm cells. In terms of tissue distribution, testis.

The protein resides in the nucleus. Its subcellular location is the chromosome. Its function is as follows. Cuttlefish spermiogenesis is characterized by a double nuclear protein transition: histones -&gt; spermatid-specific proteins (T1/T2) -&gt; protamines (SP1/SP2). The protamines compact sperm DNA into a highly condensed, stable and inactive complex. The protein is Spermatid-specific protein T1 of Sepia officinalis (Common cuttlefish).